The sequence spans 271 residues: NH(3)-dependent NAD(+) synthetase (271 aa).

43-50 contributes to the ATP binding site; sequence GISGGQDS. Mg(2+) is bound at residue D49. R137 provides a ligand contact to deamido-NAD(+). Residue T157 coordinates ATP. E162 is a binding site for Mg(2+). Residues K170 and D177 each contribute to the deamido-NAD(+) site. ATP contacts are provided by K186 and T208. 257–258 serves as a coordination point for deamido-NAD(+); that stretch reads HK.

Belongs to the NAD synthetase family. As to quaternary structure, homodimer.

It catalyses the reaction deamido-NAD(+) + NH4(+) + ATP = AMP + diphosphate + NAD(+) + H(+). It functions in the pathway cofactor biosynthesis; NAD(+) biosynthesis; NAD(+) from deamido-NAD(+) (ammonia route): step 1/1. Catalyzes the ATP-dependent amidation of deamido-NAD to form NAD. Uses ammonia as a nitrogen source. The chain is NH(3)-dependent NAD(+) synthetase from Exiguobacterium sp. (strain ATCC BAA-1283 / AT1b).